The following is a 286-amino-acid chain: Single myb histone 5 (286 aa).

The region spanning methionine 1–threonine 61 is the HTH myb-type domain. Residues tryptophan 28–asparagine 57 constitute a DNA-binding region (H-T-H motif). Positions serine 122–proline 190 constitute an H15 domain. Positions glutamate 229 to leucine 277 form a coiled coil.

This sequence belongs to the histone H1/H5 family. SMH subfamily. In terms of assembly, forms a homodimer and heterodimers.

The protein resides in the nucleus. It localises to the chromosome. It is found in the nucleolus. Its subcellular location is the telomere. In terms of biological role, binds preferentially double-stranded telomeric repeats, but may also bind to the single telomeric strand. This is Single myb histone 5 (SMH5) from Zea mays (Maize).